The sequence spans 168 residues: Small ribosomal subunit protein uS9 (168 aa).

The segment at 1 to 38 (MAKIADSIDSAQADSVENVESYSTETPESAAPAAPRPV) is disordered. Residues 9 to 22 (DSAQADSVENVESY) are compositionally biased toward polar residues. Over residues 23 to 37 (STETPESAAPAAPRP) the composition is skewed to low complexity.

This sequence belongs to the universal ribosomal protein uS9 family.

This is Small ribosomal subunit protein uS9 from Leifsonia xyli subsp. xyli (strain CTCB07).